Consider the following 330-residue polypeptide: DNA-directed RNA polymerase subunit alpha (330 aa).

Positions 1-237 (MYTEINEMLT…RQLHAFVDMK (237 aa)) are alpha N-terminal domain (alpha-NTD). An alpha C-terminal domain (alpha-CTD) region spans residues 251-330 (FDPVLLRSVD…ENWPPASLGE (80 aa)).

The protein belongs to the RNA polymerase alpha chain family. In terms of assembly, homodimer. The RNAP catalytic core consists of 2 alpha, 1 beta, 1 beta' and 1 omega subunit. When a sigma factor is associated with the core the holoenzyme is formed, which can initiate transcription.

It carries out the reaction RNA(n) + a ribonucleoside 5'-triphosphate = RNA(n+1) + diphosphate. Functionally, DNA-dependent RNA polymerase catalyzes the transcription of DNA into RNA using the four ribonucleoside triphosphates as substrates. In Legionella pneumophila (strain Paris), this protein is DNA-directed RNA polymerase subunit alpha.